Consider the following 57-residue polypeptide: Large ribosomal subunit protein bL32 (57 aa).

Residues 1 to 16 are compositionally biased toward basic residues; sequence MAVQKSRKTRSKRGMR. Positions 1-45 are disordered; the sequence is MAVQKSRKTRSKRGMRRSHDALTAPAQLSVDATSGETHRRHHMTA.

The protein belongs to the bacterial ribosomal protein bL32 family.

The polypeptide is Large ribosomal subunit protein bL32 (Psychromonas ingrahamii (strain DSM 17664 / CCUG 51855 / 37)).